Reading from the N-terminus, the 94-residue chain is Large ribosomal subunit protein bL25 (94 aa).

The protein belongs to the bacterial ribosomal protein bL25 family. In terms of assembly, part of the 50S ribosomal subunit; part of the 5S rRNA/L5/L18/L25 subcomplex. Contacts the 5S rRNA. Binds to the 5S rRNA independently of L5 and L18.

This is one of the proteins that binds to the 5S RNA in the ribosome where it forms part of the central protuberance. This chain is Large ribosomal subunit protein bL25, found in Sodalis glossinidius (strain morsitans).